Reading from the N-terminus, the 376-residue chain is Glutamate 5-kinase (376 aa).

Position 18 (K18) interacts with ATP. Substrate is bound by residues S58, D145, and N157. ATP is bound by residues 177–178 and 218–224; these read SD and TGGMASK. Residues 280-358 form the PUA domain; sequence TGALTLDAGA…SELPGELRRP (79 aa).

Belongs to the glutamate 5-kinase family.

The protein resides in the cytoplasm. It catalyses the reaction L-glutamate + ATP = L-glutamyl 5-phosphate + ADP. Its pathway is amino-acid biosynthesis; L-proline biosynthesis; L-glutamate 5-semialdehyde from L-glutamate: step 1/2. In terms of biological role, catalyzes the transfer of a phosphate group to glutamate to form L-glutamate 5-phosphate. The sequence is that of Glutamate 5-kinase from Mycobacterium tuberculosis (strain CDC 1551 / Oshkosh).